Consider the following 294-residue polypeptide: Transmembrane protein 178B (294 aa).

Positions 1–23 (MAAGRLLLYTGLSLALCALGMLA) are cleaved as a signal peptide. Residues asparagine 148 and asparagine 152 are each glycosylated (N-linked (GlcNAc...) asparagine). 3 consecutive transmembrane segments (helical) span residues 172–192 (AGFM…GVLG), 206–226 (LLFL…VAGI), and 252–272 (MFCA…CTLA).

The protein belongs to the TMEM178 family.

Its subcellular location is the membrane. The polypeptide is Transmembrane protein 178B (TMEM178B) (Homo sapiens (Human)).